The primary structure comprises 190 residues: Ribosome maturation factor RimM (190 aa).

The region spanning Asp95–Leu171 is the PRC barrel domain. The segment at Glu169–Asp190 is disordered.

Belongs to the RimM family. In terms of assembly, binds ribosomal protein uS19.

The protein localises to the cytoplasm. An accessory protein needed during the final step in the assembly of 30S ribosomal subunit, possibly for assembly of the head region. Essential for efficient processing of 16S rRNA. May be needed both before and after RbfA during the maturation of 16S rRNA. It has affinity for free ribosomal 30S subunits but not for 70S ribosomes. This is Ribosome maturation factor RimM from Rhodococcus erythropolis (strain PR4 / NBRC 100887).